Consider the following 396-residue polypeptide: Inositol polyphosphate multikinase (396 aa).

Residues 1–13 (MAAEPPALRLRPP) are compositionally biased toward low complexity. Residues 1 to 22 (MAAEPPALRLRPPGSTGDSPPV) form a disordered region. An N-acetylalanine modification is found at Ala-2. The residue at position 19 (Ser-19) is a Phosphoserine. Lys-58 contributes to the ATP binding site. Arg-65 provides a ligand contact to substrate. Residues 114–116 (EDV) and Asp-127 contribute to the ATP site. Residues Lys-129, 143-150 (KIQQQVSK), and Gln-179 each bind substrate. Residues 300 to 310 (RHRKLYAKKHQ) carry the Nuclear localization signal motif. Position 365 (Asp-365) interacts with ATP.

The protein belongs to the inositol phosphokinase (IPK) family. It depends on Mg(2+) as a cofactor. As to expression, highly expressed in kidney, and at lower levels in hippocampus, brain cortex, cerebellum, heart and lung.

It localises to the nucleus. It catalyses the reaction 1D-myo-inositol 1,4,5-trisphosphate + 2 ATP = 1D-myo-inositol 1,3,4,5,6-pentakisphosphate + 2 ADP + 2 H(+). It carries out the reaction 1D-myo-inositol 1,3,4,6-tetrakisphosphate + ATP = 1D-myo-inositol 1,3,4,5,6-pentakisphosphate + ADP + H(+). The enzyme catalyses 1-octadecanoyl-2-(5Z,8Z,11Z,14Z)-eicosatetraenoyl-sn-glycero-3-phospho-1D-myo-inositol 4,5-bisphosphate + ATP = 1-octadecanoyl-2-(5Z,8Z,11Z,14Z-eicosatetraenoyl)-sn-glycero-3-phospho-(1D-myo-inositol 3,4,5-triphosphate) + ADP + H(+). The catalysed reaction is a 1,2-diacyl-sn-glycero-3-phospho-(1D-myo-inositol-4,5-bisphosphate) + ATP = a 1,2-diacyl-sn-glycero-3-phospho-(1D-myo-inositol-3,4,5-trisphosphate) + ADP + H(+). It catalyses the reaction 1D-myo-inositol 1,4,5,6-tetrakisphosphate + ATP = 1D-myo-inositol 1,3,4,5,6-pentakisphosphate + ADP + H(+). The protein operates within phospholipid metabolism; phosphatidylinositol metabolism. Its function is as follows. Inositol phosphate kinase with a broad substrate specificity. Phosphorylates inositol 1,4,5-trisphosphate (Ins(1,4,5)P3) first to inositol 1,3,4,5-tetrakisphosphate and then to inositol 1,3,4,5,6-pentakisphosphate (Ins(1,3,4,5,6)P5). Phosphorylates inositol 1,3,4,6-tetrakisphosphate (Ins(1,3,4,6)P4). Phosphorylates inositol 1,4,5,6-tetrakisphosphate (Ins(1,4,5,6)P4). Phosphorylates glycero-3-phospho-1D-myo-inositol 4,5-bisphosphate to glycero-3-phospho-1D-myo-inositol 3,4,5-trisphosphate. Plays an important role in MLKL-mediated necroptosis via its role in the biosynthesis of inositol pentakisphosphate (InsP5) and inositol hexakisphosphate (InsP6). Binding of these highly phosphorylated inositol phosphates to MLKL mediates the release of an N-terminal auto-inhibitory region, leading to activation of the kinase. Essential for activated phospho-MLKL to oligomerize and localize to the cell membrane during necroptosis. Required for normal embryonic development, probably via its role in the biosynthesis of inositol 1,3,4,5,6-pentakisphosphate (Ins(1,3,4,5,6)P5) and inositol hexakisphosphate (InsP6). This chain is Inositol polyphosphate multikinase (Ipmk), found in Rattus norvegicus (Rat).